Here is a 446-residue protein sequence, read N- to C-terminus: Saccharopine dehydrogenase [NADP(+), L-glutamate-forming] (446 aa).

Residues 10–13, 33–35, 54–55, isoleucine 75, 97–98, 124–126, and serine 174 contribute to the NADP(+) site; these read SGFV, CRT, DV, SS, and LDP. Residues 98–99 and aspartate 125 contribute to the L-saccharopine site; that span reads SY. Residues arginine 223 and 244 to 246 each bind L-saccharopine; that span reads TLR.

The protein belongs to the saccharopine dehydrogenase family. Interacts with TRM112.

It catalyses the reaction L-saccharopine + NADP(+) + H2O = (S)-2-amino-6-oxohexanoate + L-glutamate + NADPH + H(+). It participates in amino-acid biosynthesis; L-lysine biosynthesis via AAA pathway; L-lysine from L-alpha-aminoadipate (fungal route): step 2/3. The chain is Saccharopine dehydrogenase [NADP(+), L-glutamate-forming] (LYS9) from Saccharomyces cerevisiae (strain ATCC 204508 / S288c) (Baker's yeast).